Consider the following 255-residue polypeptide: F-box/SPRY domain-containing protein 1 (255 aa).

In terms of domain architecture, F-box spans 3–51 (DPVAALCNYNVLEVIFSYLELDDLSHCSQVCKSWYHFLNDENSDVWRWH). Residues 61–253 (LKSDLLSSVS…VSMVYLGTPL (193 aa)) enclose the B30.2/SPRY domain.

It belongs to the FBXO45/Fsn family. Component of an E3 ubiquitin ligase complex composed of hiw and Fsn.

The protein resides in the synapse. It participates in protein modification; protein ubiquitination. In terms of biological role, required in the presynaptic motoneuron to down-regulate the levels of wnd and restrain synaptic terminal growth at the neuromuscular junction (NMJ). The protein is F-box/SPRY domain-containing protein 1 of Drosophila simulans (Fruit fly).